Here is a 363-residue protein sequence, read N- to C-terminus: UDP-N-acetylglucosamine--N-acetylmuramyl-(pentapeptide) pyrophosphoryl-undecaprenol N-acetylglucosamine transferase (363 aa).

UDP-N-acetyl-alpha-D-glucosamine contacts are provided by residues T16–G18, N128, R167, S195, I249, A268–E273, and Q294.

This sequence belongs to the glycosyltransferase 28 family. MurG subfamily.

It localises to the cell inner membrane. The catalysed reaction is di-trans,octa-cis-undecaprenyl diphospho-N-acetyl-alpha-D-muramoyl-L-alanyl-D-glutamyl-meso-2,6-diaminopimeloyl-D-alanyl-D-alanine + UDP-N-acetyl-alpha-D-glucosamine = di-trans,octa-cis-undecaprenyl diphospho-[N-acetyl-alpha-D-glucosaminyl-(1-&gt;4)]-N-acetyl-alpha-D-muramoyl-L-alanyl-D-glutamyl-meso-2,6-diaminopimeloyl-D-alanyl-D-alanine + UDP + H(+). It functions in the pathway cell wall biogenesis; peptidoglycan biosynthesis. Functionally, cell wall formation. Catalyzes the transfer of a GlcNAc subunit on undecaprenyl-pyrophosphoryl-MurNAc-pentapeptide (lipid intermediate I) to form undecaprenyl-pyrophosphoryl-MurNAc-(pentapeptide)GlcNAc (lipid intermediate II). The polypeptide is UDP-N-acetylglucosamine--N-acetylmuramyl-(pentapeptide) pyrophosphoryl-undecaprenol N-acetylglucosamine transferase (Marinobacter nauticus (strain ATCC 700491 / DSM 11845 / VT8) (Marinobacter aquaeolei)).